The primary structure comprises 407 residues: Serine/threonine transporter SstT (407 aa).

The next 9 membrane-spanning stretches (helical) occupy residues 14–34 (GSLV…ATVS), 48–68 (FVGA…AASI), 82–102 (IVIL…LMSF), 141–161 (AVIT…GLAL), 192–212 (IGIF…AIAG), 218–238 (LVLL…IVFF), 290–310 (IPLG…ILTL), 316–336 (MGIQ…GVSA), and 363–383 (VAMQ…SAET).

The protein belongs to the dicarboxylate/amino acid:cation symporter (DAACS) (TC 2.A.23) family.

Its subcellular location is the cell inner membrane. The catalysed reaction is L-serine(in) + Na(+)(in) = L-serine(out) + Na(+)(out). It carries out the reaction L-threonine(in) + Na(+)(in) = L-threonine(out) + Na(+)(out). Its function is as follows. Involved in the import of serine and threonine into the cell, with the concomitant import of sodium (symport system). The chain is Serine/threonine transporter SstT from Shewanella pealeana (strain ATCC 700345 / ANG-SQ1).